Reading from the N-terminus, the 375-residue chain is MVMMKKMKGSQSFRQRLLLSTLSSTPISIDEIRADETIPGLRPHEVNLLRLLEIVTDDAVVDINETGTRLKYKPGTIVGGKNLVHSCSLSRSIGYYLEPLLLLGLFGKKPLSIRLKGITNDPRDASVDTFRSTTLNIIKRFGVPAEDLELKIEARGVAPNGGGEVLLTVPNIKTLSAVHWVEEGMVKKIRGTTFSTRVTSDFEHSMRFAARGIFNNLLPDVHIFQDHRAGAQAGKSPGYGISLAAETTTGCFISADTTVSCERPDETGELDVEKKERSPAEDTGVEVASWLLQEIEKGGVVDSTHQGLLFLLCALSEQDVSKVRVGTLSPYAVETLRNIKEFLGVKFAIKPDPLTGTVILKCTGSGLINLSRKLS.

The protein belongs to the RNA 3'-terminal cyclase family. Type 2 subfamily.

It is found in the nucleus. It localises to the nucleolus. In terms of biological role, does not have cyclase activity. Plays a role in 40S-ribosomal-subunit biogenesis in the early pre-rRNA processing steps at sites A0, A1 and A2 that are required for proper maturation of the 18S RNA. The protein is Probable RNA 3'-terminal phosphate cyclase-like protein of Arabidopsis thaliana (Mouse-ear cress).